The sequence spans 489 residues: Interferon gamma receptor 1 (489 aa).

An N-terminal signal peptide occupies residues 1-17; it reads MALLFLLPLVMQGVSRA. The Extracellular segment spans residues 18–245; sequence EMGTADLGPS…ITIFNSSIKG (228 aa). Residues Asn-34, Asn-79, and Asn-86 are each glycosylated (N-linked (GlcNAc...) asparagine). A disulfide bond links Cys-77 and Cys-85. Cys-122 and Cys-167 are joined by a disulfide. N-linked (GlcNAc...) asparagine glycosylation occurs at Asn-179. Cystine bridges form between Cys-195/Cys-200 and Cys-214/Cys-235. N-linked (GlcNAc...) asparagine glycosylation is present at Asn-240. A helical membrane pass occupies residues 246-266; the sequence is SLWIPVVAALLLFLVLSLVFI. The Cytoplasmic segment spans residues 267–489; that stretch reads CFYIKKINPL…RPTEDSKEFS (223 aa). Positions 329–437 are disordered; sequence ATVPGMHTED…SEFPPNNKGE (109 aa). The span at 335 to 348 shows a compositional bias: basic and acidic residues; it reads HTEDNPGKVEHTEE. Positions 349–360 are enriched in polar residues; it reads LSSITEVVTTEE. Ser-369 bears the Phosphoserine mark. Phosphothreonine is present on Thr-372. Ser-378 bears the Phosphoserine mark. The segment covering 379 to 391 has biased composition (low complexity); that stretch reads SSPLSSNQSEPGS. The segment covering 401-412 has biased composition (basic and acidic residues); the sequence is NCSESDHSRNGF. Ser-403 bears the Phosphoserine mark. A compositionally biased stretch (low complexity) spans 415 to 429; that stretch reads DSSCLESHSSLSDSE. The residue at position 457 (Tyr-457) is a Phosphotyrosine.

Belongs to the type II cytokine receptor family. In terms of assembly, monomer. Heterodimer with IFNGR2, to form the IFNG receptor complex. Interacts with JAK1. Interacts (when phosphorylated) with STAT1. Interacts with SOCS1. Post-translationally, phosphorylated at Ser/Thr residues. Phosphorylation of Tyr-457 is required for IFNG receptor signal transduction. Influenza virus infection leads to phosphorylation in a CSNK1A1-dependent manner. Ubiquitinated after phosphorylation in a CSNK1A1-dependent manner, leading to the lysosome-dependent degradation. Proteasomally degraded through 'Lys-48'-mediated ubiquitination. Ubiquitination is necessary for efficient IFNGR1 signaling.

It localises to the cell membrane. Functionally, receptor subunit for interferon gamma/INFG that plays crucial roles in antimicrobial, antiviral, and antitumor responses by activating effector immune cells and enhancing antigen presentation. Associates with transmembrane accessory factor IFNGR2 to form a functional receptor. Upon ligand binding, the intracellular domain of IFNGR1 opens out to allow association of downstream signaling components JAK1 and JAK2. In turn, activated JAK1 phosphorylates IFNGR1 to form a docking site for STAT1. Subsequent phosphorylation of STAT1 leads to dimerization, translocation to the nucleus, and stimulation of target gene transcription. STAT3 can also be activated in a similar manner although activation seems weaker. IFNGR1 intracellular domain phosphorylation also provides a docking site for SOCS1 that regulates the JAK-STAT pathway by competing with STAT1 binding to IFNGR1. The protein is Interferon gamma receptor 1 of Homo sapiens (Human).